Here is a 120-residue protein sequence, read N- to C-terminus: uncharacterized protein (120 aa).

This sequence to M.tuberculosis Rv0026 and Rv0739.

This is an uncharacterized protein from Mycobacterium tuberculosis (strain CDC 1551 / Oshkosh).